The primary structure comprises 356 residues: Protein RecA (356 aa).

68–75 (GQESSGKT) is an ATP binding site.

It belongs to the RecA family.

Its subcellular location is the cytoplasm. Functionally, can catalyze the hydrolysis of ATP in the presence of single-stranded DNA, the ATP-dependent uptake of single-stranded DNA by duplex DNA, and the ATP-dependent hybridization of homologous single-stranded DNAs. It interacts with LexA causing its activation and leading to its autocatalytic cleavage. This is Protein RecA from Thermotoga sp. (strain RQ2).